The sequence spans 456 residues: CBL-interacting serine/threonine-protein kinase 2 (456 aa).

The Protein kinase domain maps to Tyr12 to Phe266. ATP is bound by residues Leu18–Val26 and Lys41. Residue Asp134 is the Proton acceptor of the active site. Positions Asp152–Glu181 are activation loop. Residue Ser156 is modified to Phosphoserine. The residue at position 170 (Thr170) is a Phosphothreonine. Residues Met280–Pro309 form a disordered region. Residues Pro309–Gly333 enclose the NAF domain. Positions Lys338–Ile367 are PPI.

This sequence belongs to the protein kinase superfamily. CAMK Ser/Thr protein kinase family. SNF1 subfamily. As to quaternary structure, interacts with CBL2, CBL3 and CBL5. Requires Mn(2+) as cofactor.

It catalyses the reaction L-seryl-[protein] + ATP = O-phospho-L-seryl-[protein] + ADP + H(+). The enzyme catalyses L-threonyl-[protein] + ATP = O-phospho-L-threonyl-[protein] + ADP + H(+). CIPK serine-threonine protein kinases interact with CBL proteins. Binding of a CBL protein to the regulatory NAF domain of CIPK protein lead to the activation of the kinase in a calcium-dependent manner. The protein is CBL-interacting serine/threonine-protein kinase 2 (CIPK2) of Arabidopsis thaliana (Mouse-ear cress).